A 307-amino-acid polypeptide reads, in one-letter code: Olfactory receptor 13G1 (307 aa).

Residues 1-22 (MNHSVVTEFIILGLTKKPELQG) lie on the Extracellular side of the membrane. N-linked (GlcNAc...) asparagine glycosylation is present at Asn2. The helical transmembrane segment at 23–43 (IIFLFFLIVYLVAFLGNMLII) threads the bilayer. The Cytoplasmic portion of the chain corresponds to 44–51 (IAKIYNNT). The helical transmembrane segment at 52 to 72 (LHTPMYVFLLTLAVVDIICTT) threads the bilayer. The Extracellular portion of the chain corresponds to 73 to 96 (SIIPKMLGTMLTSENTISYAGCMS). A disulfide bridge connects residues Cys94 and Cys186. A helical transmembrane segment spans residues 97–117 (QLFLFTWSLGAEMVLFTTMAY). Topologically, residues 118–136 (DRYVAICFPLHYSTIMNHH) are cytoplasmic. The chain crosses the membrane as a helical span at residues 137–157 (MCVALLSMVMAIAVTNSWVHT). Over 158–194 (ALIMRLTFCGPNTIDHFFCEIPPLLALSCSPVRINEV) the chain is Extracellular. The helical transmembrane segment at 195-214 (MVYVADITLAIGDFILTCIS) threads the bilayer. Residues 215–234 (YGFIIVAILRIRTVEGKRKA) are Cytoplasmic-facing. A helical transmembrane segment spans residues 235 to 255 (FSTCSSHLTVVTLYYSPVIYT). At 256-268 (YIRPASSYTFERD) the chain is on the extracellular side. The helical transmembrane segment at 269 to 289 (KVVAALYTLVTPTLNPMVYSF) threads the bilayer. The Cytoplasmic segment spans residues 290 to 307 (QNREMQAGIRKVFAFLKH).

It belongs to the G-protein coupled receptor 1 family.

The protein localises to the cell membrane. Functionally, odorant receptor. The protein is Olfactory receptor 13G1 (OR13G1) of Homo sapiens (Human).